The following is a 180-amino-acid chain: Large ribosomal subunit protein uL5 (180 aa).

This sequence belongs to the universal ribosomal protein uL5 family. In terms of assembly, part of the 50S ribosomal subunit; part of the 5S rRNA/L5/L18/L25 subcomplex. Contacts the 5S rRNA and the P site tRNA. Forms a bridge to the 30S subunit in the 70S ribosome.

This is one of the proteins that bind and probably mediate the attachment of the 5S RNA into the large ribosomal subunit, where it forms part of the central protuberance. In the 70S ribosome it contacts protein S13 of the 30S subunit (bridge B1b), connecting the 2 subunits; this bridge is implicated in subunit movement. Contacts the P site tRNA; the 5S rRNA and some of its associated proteins might help stabilize positioning of ribosome-bound tRNAs. In Streptococcus mutans serotype c (strain ATCC 700610 / UA159), this protein is Large ribosomal subunit protein uL5.